Here is a 419-residue protein sequence, read N- to C-terminus: S-adenosylmethionine synthase (419 aa).

His-15 provides a ligand contact to ATP. Asp-17 contacts Mg(2+). A K(+)-binding site is contributed by Glu-43. Positions 56 and 100 each coordinate L-methionine. A flexible loop region spans residues 100-110 (QSPDIAQGVDE). ATP-binding positions include 171–173 (DGK), 248–249 (KF), Asp-257, 263–264 (RK), Ala-280, and Lys-284. An L-methionine-binding site is contributed by Asp-257. Lys-288 serves as a coordination point for L-methionine.

Belongs to the AdoMet synthase family. As to quaternary structure, homotetramer; dimer of dimers. Mg(2+) is required as a cofactor. Requires K(+) as cofactor.

Its subcellular location is the cytoplasm. It catalyses the reaction L-methionine + ATP + H2O = S-adenosyl-L-methionine + phosphate + diphosphate. It participates in amino-acid biosynthesis; S-adenosyl-L-methionine biosynthesis; S-adenosyl-L-methionine from L-methionine: step 1/1. Catalyzes the formation of S-adenosylmethionine (AdoMet) from methionine and ATP. The overall synthetic reaction is composed of two sequential steps, AdoMet formation and the subsequent tripolyphosphate hydrolysis which occurs prior to release of AdoMet from the enzyme. This is S-adenosylmethionine synthase from Synechococcus sp. (strain WH7803).